The primary structure comprises 151 residues: UPF0208 membrane protein PC1_2779 (151 aa).

The next 2 membrane-spanning stretches (helical) occupy residues 46-66 and 69-89; these read FGIR…IALG and LGPA…GLWW.

The protein belongs to the UPF0208 family.

It localises to the cell inner membrane. The protein is UPF0208 membrane protein PC1_2779 of Pectobacterium carotovorum subsp. carotovorum (strain PC1).